The primary structure comprises 37 residues: Large ribosomal subunit protein bL36 (37 aa).

Belongs to the bacterial ribosomal protein bL36 family.

The chain is Large ribosomal subunit protein bL36 from Colwellia psychrerythraea (strain 34H / ATCC BAA-681) (Vibrio psychroerythus).